A 342-amino-acid chain; its full sequence is MENILDFTLEELKEWLISKEEKAFRAKQVFDWIYNKLIFDFNNMKNIPYKTKNLLSDNFYVGVPKVVKKLMSQDKNTYKFLFEYKDGNIIESVVMKYKHGNSICVSTQVGCRMGCKFCASTLDGVIRNLTSGEILSQIMAAQKEIGERISNVVLMGSGEPLDNFENVTKFLDLVTSDTTLNIGQRHITLSTCGIVPKIKELADKNYNITLAISLHSPEDLLRKEMMPIANKYSIKELMEACDYYINKTNRRITFEYALVKGKNDSIKEAKKLSTVLKGKLCHVNLIPVNEIKENSYEKSTLKNIESFGNILKENGIETTIRREMGADINAACGQLRRSYVSK.

Residue glutamate 91 is the Proton acceptor of the active site. Residues 97–327 (YKHGNSICVS…TTIRREMGAD (231 aa)) form the Radical SAM core domain. Cysteine 104 and cysteine 332 are oxidised to a cystine. [4Fe-4S] cluster is bound by residues cysteine 111, cysteine 115, and cysteine 118. S-adenosyl-L-methionine contacts are provided by residues 158 to 159 (GE), serine 190, 213 to 215 (SLH), and asparagine 289. The active-site S-methylcysteine intermediate is cysteine 332.

The protein belongs to the radical SAM superfamily. RlmN family. It depends on [4Fe-4S] cluster as a cofactor.

It localises to the cytoplasm. The enzyme catalyses adenosine(2503) in 23S rRNA + 2 reduced [2Fe-2S]-[ferredoxin] + 2 S-adenosyl-L-methionine = 2-methyladenosine(2503) in 23S rRNA + 5'-deoxyadenosine + L-methionine + 2 oxidized [2Fe-2S]-[ferredoxin] + S-adenosyl-L-homocysteine. It carries out the reaction adenosine(37) in tRNA + 2 reduced [2Fe-2S]-[ferredoxin] + 2 S-adenosyl-L-methionine = 2-methyladenosine(37) in tRNA + 5'-deoxyadenosine + L-methionine + 2 oxidized [2Fe-2S]-[ferredoxin] + S-adenosyl-L-homocysteine. In terms of biological role, specifically methylates position 2 of adenine 2503 in 23S rRNA and position 2 of adenine 37 in tRNAs. In Clostridium botulinum (strain ATCC 19397 / Type A), this protein is Probable dual-specificity RNA methyltransferase RlmN.